A 796-amino-acid polypeptide reads, in one-letter code: Molybdenum cofactor sulfurase (796 aa).

N6-(pyridoxal phosphate)lysine is present on Lys-246. Cys-418 is an active-site residue. The MOSC domain maps to 650–796 (LRLLRQSSQR…LTCGDVVVVT (147 aa)). Phosphoserine is present on Ser-752.

The protein belongs to the class-V pyridoxal-phosphate-dependent aminotransferase family. MOCOS subfamily. Pyridoxal 5'-phosphate serves as cofactor.

The enzyme catalyses Mo-molybdopterin + L-cysteine + AH2 = thio-Mo-molybdopterin + L-alanine + A + H2O. Sulfurates the molybdenum cofactor. Sulfation of molybdenum is essential for xanthine dehydrogenase (XDH) and aldehyde oxidase (ADO) enzymes in which molybdenum cofactor is liganded by 1 oxygen and 1 sulfur atom in active form. The chain is Molybdenum cofactor sulfurase from Drosophila persimilis (Fruit fly).